Reading from the N-terminus, the 314-residue chain is Probable cell division protein WhiA (314 aa).

The segment at residues Ser-274–Asn-308 is a DNA-binding region (H-T-H motif).

Belongs to the WhiA family.

In terms of biological role, involved in cell division and chromosome segregation. The sequence is that of Probable cell division protein WhiA from Staphylococcus aureus (strain Mu3 / ATCC 700698).